The sequence spans 458 residues: tRNA modification GTPase MnmE (458 aa).

(6S)-5-formyl-5,6,7,8-tetrahydrofolate-binding residues include Arg-22, Glu-84, and Arg-123. The TrmE-type G domain occupies 220–379 (GIATAIIGRP…LEKAIADLFF (160 aa)). Asn-230 is a binding site for K(+). Residues 230 to 235 (NVGKSS), 249 to 255 (TDIAGTT), and 274 to 277 (DTAG) each bind GTP. Residue Ser-234 coordinates Mg(2+). Positions 249, 251, and 254 each coordinate K(+). Residue Thr-255 coordinates Mg(2+). Lys-458 lines the (6S)-5-formyl-5,6,7,8-tetrahydrofolate pocket.

Belongs to the TRAFAC class TrmE-Era-EngA-EngB-Septin-like GTPase superfamily. TrmE GTPase family. Homodimer. Heterotetramer of two MnmE and two MnmG subunits. K(+) is required as a cofactor.

The protein resides in the cytoplasm. Exhibits a very high intrinsic GTPase hydrolysis rate. Involved in the addition of a carboxymethylaminomethyl (cmnm) group at the wobble position (U34) of certain tRNAs, forming tRNA-cmnm(5)s(2)U34. The protein is tRNA modification GTPase MnmE of Bacillus cereus (strain ATCC 14579 / DSM 31 / CCUG 7414 / JCM 2152 / NBRC 15305 / NCIMB 9373 / NCTC 2599 / NRRL B-3711).